Consider the following 622-residue polypeptide: MSQSSKTLKNMSKVNEAFIKPFPSSNKIYVQGSCKDIQVPMREIILTDTIGELAEKNAPIHVYDTSGVYTDPNVKIDLRKGLGSIRSTWIEQRNDTEILTKLSSNFSNERRDDAELDVLRFEHLQVPRRAKNTKNVSQMYYAKQGIITSEMEYIAIRENCKWQEYKDQIGQNEGESFGANIPDVITSEFVRDEVSKGRAVIPANINHPETEPMIIGRNFMVKINGNIGNSALGSSIEQEVDKMVWGIRWGADTIMDLSTGKNIHETREWIIRNSPVPIGTVPIYQTLEKVNGIAEDLTWEVFRDTLIEQAEQGVDYFTIHAGVRLQYVPLTINRIIGIVSRGGSIMAKWCLAHHTESFIYTHFEDICEIMKQYDVTFSLGDGLRPGCIADANDAAQFGELETLGELTKIAWKHDVQTFIEGPGHVPMQMIKENMDKQLKECGEAPFYTLGPLTTDIAPGYDHITSAIGAAQIGWYGCAMLCYVTPKEHLGLPNQDDVKQGIIAYKIAAHAADLAKGHPGAQIRDNALSKARFEFRWEDQFNLGLDPDTARKYHDETMPKQAAKTSHFCSMCGPKFCSMKITQEIKTIDAGEIAKIKAIQIEMDKKSAEFLKNDSEIYMKEGA.

Substrate is bound by residues asparagine 226, methionine 255, tyrosine 284, histidine 320, 340–342, 381–384, and glutamate 420; these read SRG and DGLR. Residue histidine 424 participates in Zn(2+) binding. A substrate-binding site is contributed by tyrosine 447. A Zn(2+)-binding site is contributed by histidine 488. The [4Fe-4S] cluster site is built by cysteine 568, cysteine 571, and cysteine 576.

Belongs to the ThiC family. As to quaternary structure, homodimer. [4Fe-4S] cluster serves as cofactor.

It catalyses the reaction 5-amino-1-(5-phospho-beta-D-ribosyl)imidazole + S-adenosyl-L-methionine = 4-amino-2-methyl-5-(phosphooxymethyl)pyrimidine + CO + 5'-deoxyadenosine + formate + L-methionine + 3 H(+). It participates in cofactor biosynthesis; thiamine diphosphate biosynthesis. In terms of biological role, catalyzes the synthesis of the hydroxymethylpyrimidine phosphate (HMP-P) moiety of thiamine from aminoimidazole ribotide (AIR) in a radical S-adenosyl-L-methionine (SAM)-dependent reaction. The polypeptide is Phosphomethylpyrimidine synthase (Ruthia magnifica subsp. Calyptogena magnifica).